Consider the following 182-residue polypeptide: Bifunctional protein PyrR (182 aa).

Residues 99 to 111 carry the PRPP-binding motif; sequence IVLVDDVIFTGRT.

This sequence belongs to the purine/pyrimidine phosphoribosyltransferase family. PyrR subfamily. Homodimer and homohexamer; in equilibrium.

It carries out the reaction UMP + diphosphate = 5-phospho-alpha-D-ribose 1-diphosphate + uracil. Functionally, regulates transcriptional attenuation of the pyrimidine nucleotide (pyr) operon by binding in a uridine-dependent manner to specific sites on pyr mRNA. This disrupts an antiterminator hairpin in the RNA and favors formation of a downstream transcription terminator, leading to a reduced expression of downstream genes. Also displays a weak uracil phosphoribosyltransferase activity which is not physiologically significant. In Caldicellulosiruptor saccharolyticus (strain ATCC 43494 / DSM 8903 / Tp8T 6331), this protein is Bifunctional protein PyrR.